We begin with the raw amino-acid sequence, 445 residues long: Reticulon-4 receptor-like 1 (445 aa).

An N-terminal signal peptide occupies residues 1–24; that stretch reads MLRKGCCVELLLLLLAGELPLGGG. In terms of domain architecture, LRRNT spans 25–54; sequence CPRDCVCYPAPMTVSCQAHNFAAIPEGIPE. LRR repeat units lie at residues 55 to 76, 77 to 98, 101 to 123, 126 to 147, 150 to 171, 174 to 195, 198 to 219, and 222 to 243; these read DSER…HFSP, AMVT…TFEG, HLEE…TFQG, KLHA…IFGG, SLQY…IFVD, NLSH…IFRG, NLDR…AFHD, and RLTT…CLAP. Positions 255 to 306 constitute an LRRCT domain; the sequence is NAWDCGCRARSLWEWLRRFRGSSSAVPCATPELRQGQDLKLLRVEDFRNCTG. 2 disordered regions span residues 307-377 and 401-424; these read PVSP…SGKE and RPKR…QQAS. Basic residues-rich tracts occupy residues 352–366 and 401–413; these read GYKK…HRNR and RPKR…RRTP. A lipid anchor (GPI-anchor amidated serine) is attached at S424. Residues 424 to 444 traverse the membrane as a helical segment; the sequence is SSGTALGAPLLAWILGLAVTL. Positions 425–445 are cleaved as a propeptide — removed in mature form; the sequence is SGTALGAPLLAWILGLAVTLR.

Belongs to the Nogo receptor family. In terms of assembly, identified in a complex that contains RTN4R, RTN4RL1 and NGFR; the interaction depends on the presence of chondroitin sulfate proteoglycans. Does not interact with MAG, OMG and RTN4. Detected in brain (at protein level). Detected in retina ganglion cell layer and inner nuclear layer.

Its subcellular location is the cell membrane. The protein localises to the membrane raft. It is found in the perikaryon. The protein resides in the cell projection. Its function is as follows. Cell surface receptor that plays a functionally redundant role in postnatal brain development and in regulating axon regeneration in the adult central nervous system. Contributes to normal axon migration across the brain midline and normal formation of the corpus callosum. Protects motoneurons against apoptosis; protection against apoptosis is probably mediated by MAG. Plays a role in inhibiting neurite outgrowth and axon regeneration via its binding to neuronal chondroitin sulfate proteoglycans. Binds heparin. Like other family members, plays a role in restricting the number dendritic spines and the number of synapses that are formed during brain development. Signaling mediates activation of Rho and downstream reorganization of the actin cytoskeleton. The protein is Reticulon-4 receptor-like 1 of Mus musculus (Mouse).